Reading from the N-terminus, the 475-residue chain is Putative response regulator NtrX-like (475 aa).

Positions 5-121 (DVLILDDEES…KLIILLKRAC (117 aa)) constitute a Response regulatory domain. The residue at position 54 (aspartate 54) is a 4-aspartylphosphate. The Sigma-54 factor interaction domain occupies 143–369 (LVGGCSVTLK…LRNVVEWTLI (227 aa)). ATP-binding positions include 171–178 (GKVGSGKE) and 232–241 (ANNGTLYIDE).

Member of the two-component regulatory system RT0550/RT0603. This chain is Putative response regulator NtrX-like, found in Rickettsia typhi (strain ATCC VR-144 / Wilmington).